Here is a 520-residue protein sequence, read N- to C-terminus: 2-isopropylmalate synthase (520 aa).

Positions 12-274 (VVIFDTTLRD…WCNVESTMLT (263 aa)) constitute a Pyruvate carboxyltransferase domain. Positions 21, 209, 211, and 245 each coordinate Mn(2+). Residues 398-520 (KLTSLTVIAG…RDVPSAAAAS (123 aa)) form a regulatory domain region.

Belongs to the alpha-IPM synthase/homocitrate synthase family. LeuA type 1 subfamily. As to quaternary structure, homodimer. The cofactor is Mn(2+).

The protein localises to the cytoplasm. The enzyme catalyses 3-methyl-2-oxobutanoate + acetyl-CoA + H2O = (2S)-2-isopropylmalate + CoA + H(+). The protein operates within amino-acid biosynthesis; L-leucine biosynthesis; L-leucine from 3-methyl-2-oxobutanoate: step 1/4. In terms of biological role, catalyzes the condensation of the acetyl group of acetyl-CoA with 3-methyl-2-oxobutanoate (2-ketoisovalerate) to form 3-carboxy-3-hydroxy-4-methylpentanoate (2-isopropylmalate). This chain is 2-isopropylmalate synthase, found in Nitrobacter hamburgensis (strain DSM 10229 / NCIMB 13809 / X14).